A 989-amino-acid polypeptide reads, in one-letter code: DEAD-box ATP-dependent RNA helicase 45 (989 aa).

Basic and acidic residues-rich tracts occupy residues 1 to 39 (MLEK…KRCD) and 64 to 101 (RDSK…EKEK). Disordered stretches follow at residues 1–248 (MLEK…AADE) and 305–330 (QGED…DDEE). Residues 88 to 182 (LKRDRERRER…ELKRQNEEAQ (95 aa)) are a coiled coil. Serine 119 carries the post-translational modification Phosphoserine. Residues 134-179 (SRHGDDDVEKKTRDEQVEDEQKQLAEEVEKRRRRVQEWQELKRQNE) are compositionally biased toward basic and acidic residues. Serine 200 carries the phosphoserine modification. Residues 203-222 (EVKSDSEMDVDRDTKLENGG) show a composition bias toward basic and acidic residues. Polar residues predominate over residues 230 to 239 (ENETAVTVSE). Positions 321–330 (DPSLDEDDEE) are enriched in acidic residues. A Q motif motif is present at residues 396–424 (QFWHQTGLTSKILDTLKKLNYEKPMPIQA). Residues 427–605 (LPIIMSGRDC…RKVLNKPVEI (179 aa)) enclose the Helicase ATP-binding domain. 440 to 447 (AKTGSGKT) lines the ATP pocket. The DEAD box signature appears at 553–556 (DEAD). The Helicase C-terminal domain occupies 590-748 (QVETLARKVL…PVPDDVKAVA (159 aa)).

Belongs to the DEAD box helicase family. DDX46/PRP5 subfamily.

The enzyme catalyses ATP + H2O = ADP + phosphate + H(+). This chain is DEAD-box ATP-dependent RNA helicase 45 (RH45), found in Arabidopsis thaliana (Mouse-ear cress).